The primary structure comprises 72 residues: Rubredoxin (72 aa).

The Rubredoxin-like domain maps to 19–72 (DAVLECKICWQRYDPAEGDPVWQIPPGTPFAALPAHWRCPRCDGDREQFMVVDG). Residues C24, C27, C57, and C60 each contribute to the Fe cation site.

This sequence belongs to the rubredoxin family. Fe(3+) serves as cofactor.

Its function is as follows. Rubredoxin is a small nonheme, iron protein lacking acid-labile sulfide. Its single Fe, chelated to 4 Cys, functions as an electron acceptor and may also stabilize the conformation of the molecule. Could be involved in hydrogenase-linked redox processes. The polypeptide is Rubredoxin (hoxR) (Azotobacter vinelandii).